The following is a 236-amino-acid chain: MTEPLTPRDRLIVALDMASRDEAERLIDRIGDAAAFYKIGYRLGYAGGLALAERLAASGVKVFLDLKLHDIGNTVEEGVQSLARLGAHLLTVHAYPQTMRAARRGRDSVPGSALRLLAVTVLTSYDDADLREAGYAGGVADLVASRAAAARDIGIDGIVCAATEAAAVRAVIGPDRLIVTPGIRPAGAASGDQKRVVTPAAAIRAGADHLVVGRPITEAADPRAAARSIVSEIAEA.

Residues Asp-16, Lys-38, 65–74, Thr-123, Arg-184, Gln-193, Gly-213, and Arg-214 each bind substrate; that span reads DLKLHDIGNT. The active-site Proton donor is the Lys-67.

This sequence belongs to the OMP decarboxylase family. Type 1 subfamily. In terms of assembly, homodimer.

It carries out the reaction orotidine 5'-phosphate + H(+) = UMP + CO2. It participates in pyrimidine metabolism; UMP biosynthesis via de novo pathway; UMP from orotate: step 2/2. In terms of biological role, catalyzes the decarboxylation of orotidine 5'-monophosphate (OMP) to uridine 5'-monophosphate (UMP). This Methylobacterium sp. (strain 4-46) protein is Orotidine 5'-phosphate decarboxylase.